Consider the following 205-residue polypeptide: Thymidine kinase (205 aa).

Residues Ser9–Ser16 and Asp87–Gln90 contribute to the ATP site. Glu88 functions as the Proton acceptor in the catalytic mechanism. Positions 145, 147, 182, and 185 each coordinate Zn(2+).

This sequence belongs to the thymidine kinase family. As to quaternary structure, homotetramer.

It is found in the cytoplasm. It carries out the reaction thymidine + ATP = dTMP + ADP + H(+). The chain is Thymidine kinase from Salmonella choleraesuis (strain SC-B67).